The primary structure comprises 558 residues: EF-hand and coiled-coil domain-containing protein 1 (558 aa).

Residues 43–78 enclose the EF-hand domain; sequence GLDQYLQEVFHHLDCRGAGRLPRADFRALCAVLGLN. The segment covering 161-170 has biased composition (basic residues); it reads LRRPRRRRRP. Disordered stretches follow at residues 161–183 and 304–395; these read LRRP…YGER and RSEG…QPSG. 2 coiled-coil regions span residues 179–304 and 453–495; these read AYGE…RGYR and VEAE…LNIS.

This Mus musculus (Mouse) protein is EF-hand and coiled-coil domain-containing protein 1 (Efcc1).